A 729-amino-acid polypeptide reads, in one-letter code: Phosphoribosylformylglycinamidine synthase subunit PurL (729 aa).

Histidine 54 is a catalytic residue. 2 residues coordinate ATP: tyrosine 57 and lysine 96. Glutamate 98 contacts Mg(2+). Residues 99-102 (SHNH) and arginine 121 each bind substrate. Catalysis depends on histidine 100, which acts as the Proton acceptor. Aspartate 122 contributes to the Mg(2+) binding site. Glutamine 245 lines the substrate pocket. A Mg(2+)-binding site is contributed by aspartate 273. Residue 317–319 (ETQ) coordinates substrate. The ATP site is built by aspartate 495 and glycine 532. Mg(2+) is bound at residue asparagine 533. Serine 535 contributes to the substrate binding site.

It belongs to the FGAMS family. Monomer. Part of the FGAM synthase complex composed of 1 PurL, 1 PurQ and 2 PurS subunits.

It is found in the cytoplasm. It catalyses the reaction N(2)-formyl-N(1)-(5-phospho-beta-D-ribosyl)glycinamide + L-glutamine + ATP + H2O = 2-formamido-N(1)-(5-O-phospho-beta-D-ribosyl)acetamidine + L-glutamate + ADP + phosphate + H(+). The protein operates within purine metabolism; IMP biosynthesis via de novo pathway; 5-amino-1-(5-phospho-D-ribosyl)imidazole from N(2)-formyl-N(1)-(5-phospho-D-ribosyl)glycinamide: step 1/2. In terms of biological role, part of the phosphoribosylformylglycinamidine synthase complex involved in the purines biosynthetic pathway. Catalyzes the ATP-dependent conversion of formylglycinamide ribonucleotide (FGAR) and glutamine to yield formylglycinamidine ribonucleotide (FGAM) and glutamate. The FGAM synthase complex is composed of three subunits. PurQ produces an ammonia molecule by converting glutamine to glutamate. PurL transfers the ammonia molecule to FGAR to form FGAM in an ATP-dependent manner. PurS interacts with PurQ and PurL and is thought to assist in the transfer of the ammonia molecule from PurQ to PurL. This Staphylococcus aureus (strain USA300) protein is Phosphoribosylformylglycinamidine synthase subunit PurL.